Here is a 98-residue protein sequence, read N- to C-terminus: Aspartyl/glutamyl-tRNA(Asn/Gln) amidotransferase subunit C (98 aa).

Belongs to the GatC family. Heterotrimer of A, B and C subunits.

It catalyses the reaction L-glutamyl-tRNA(Gln) + L-glutamine + ATP + H2O = L-glutaminyl-tRNA(Gln) + L-glutamate + ADP + phosphate + H(+). The catalysed reaction is L-aspartyl-tRNA(Asn) + L-glutamine + ATP + H2O = L-asparaginyl-tRNA(Asn) + L-glutamate + ADP + phosphate + 2 H(+). Functionally, allows the formation of correctly charged Asn-tRNA(Asn) or Gln-tRNA(Gln) through the transamidation of misacylated Asp-tRNA(Asn) or Glu-tRNA(Gln) in organisms which lack either or both of asparaginyl-tRNA or glutaminyl-tRNA synthetases. The reaction takes place in the presence of glutamine and ATP through an activated phospho-Asp-tRNA(Asn) or phospho-Glu-tRNA(Gln). This chain is Aspartyl/glutamyl-tRNA(Asn/Gln) amidotransferase subunit C, found in Roseiflexus castenholzii (strain DSM 13941 / HLO8).